A 246-amino-acid polypeptide reads, in one-letter code: Ubiquinone biosynthesis O-methyltransferase (246 aa).

4 residues coordinate S-adenosyl-L-methionine: R44, G63, D84, and M128.

The protein belongs to the methyltransferase superfamily. UbiG/COQ3 family.

The catalysed reaction is a 3-demethylubiquinol + S-adenosyl-L-methionine = a ubiquinol + S-adenosyl-L-homocysteine + H(+). It catalyses the reaction a 3-(all-trans-polyprenyl)benzene-1,2-diol + S-adenosyl-L-methionine = a 2-methoxy-6-(all-trans-polyprenyl)phenol + S-adenosyl-L-homocysteine + H(+). The protein operates within cofactor biosynthesis; ubiquinone biosynthesis. Functionally, O-methyltransferase that catalyzes the 2 O-methylation steps in the ubiquinone biosynthetic pathway. The polypeptide is Ubiquinone biosynthesis O-methyltransferase (Xylella fastidiosa (strain Temecula1 / ATCC 700964)).